The primary structure comprises 302 residues: Oxygen-dependent coproporphyrinogen-III oxidase (302 aa).

Ser94 serves as a coordination point for substrate. A divalent metal cation is bound by residues His98 and His108. The active-site Proton donor is His108. Residue 110-112 (NVR) participates in substrate binding. Residues His147 and His177 each coordinate a divalent metal cation. Residues 242-277 (YVEFNLVWDRGTLFGLQSGGRTESILMSMPPLVRWE) are important for dimerization. 260-262 (GGR) provides a ligand contact to substrate.

Belongs to the aerobic coproporphyrinogen-III oxidase family. As to quaternary structure, homodimer. A divalent metal cation is required as a cofactor.

The protein localises to the cytoplasm. The enzyme catalyses coproporphyrinogen III + O2 + 2 H(+) = protoporphyrinogen IX + 2 CO2 + 2 H2O. It participates in porphyrin-containing compound metabolism; protoporphyrin-IX biosynthesis; protoporphyrinogen-IX from coproporphyrinogen-III (O2 route): step 1/1. Its function is as follows. Involved in the heme biosynthesis. Catalyzes the aerobic oxidative decarboxylation of propionate groups of rings A and B of coproporphyrinogen-III to yield the vinyl groups in protoporphyrinogen-IX. This Chromobacterium violaceum (strain ATCC 12472 / DSM 30191 / JCM 1249 / CCUG 213 / NBRC 12614 / NCIMB 9131 / NCTC 9757 / MK) protein is Oxygen-dependent coproporphyrinogen-III oxidase.